The sequence spans 113 residues: UPF0145 protein MTH_544 (113 aa).

The protein belongs to the UPF0145 family.

The polypeptide is UPF0145 protein MTH_544 (Methanothermobacter thermautotrophicus (strain ATCC 29096 / DSM 1053 / JCM 10044 / NBRC 100330 / Delta H) (Methanobacterium thermoautotrophicum)).